The sequence spans 644 residues: MGIQILPPQLANQIAAGEVVERPASVVKELVENSLDAGATRIDIEIDKGGSKLIKIRDNGSGIPKDELALALSRHATSKLHSLDDLEAILSFGFRGEALASISSVSRLTLTSRTAEQTEAWQAYAEGVDMAVKVMPAAHPVGSTIEVVDLFFNTPARRRFLKSDKTEFTHIDEWLKRIALVRGDIHFTLTHNGKTVRNYRPAMNEPQYLQRLTQVAGRQFADEALRVECQHDDLRLSGYLQSPWSTVLTDTHYFYVNGRLVRDRLVNHAVRQAFAQKAEVEQPGYVLMLDIDPHQVDVNVHPAKHEVRFHQSRYVHDYILQALQSALEEAGELGFERPFEPSSPQVRDEVSLSESGAQTQTEHHAFELQSPESKTHSTWDEASRVDTSRAEISRDSSLGERTRDIASTRPYAGVQSNAYGSMAVPRESRSGSTGESRARAELPSKVAIASYGELLQTPSYNVQDKPYQPVLAMPAILNGQYWVLAQEQNLSLLPIQSVALATRSHEIETKLATGLIGQPLLMPVSIAADTDWPALLEEHETLIRQLGLELTIRYQQLIIKKVPPYLRDSQLAKVIPEWLQSLRFEAPAPNALAVWLAEQSLTGFTSAADIWAAYCQLTEEKRQQIADKAVSLPWQSWLEEQAIE.

The interval 336 to 400 is disordered; the sequence is ERPFEPSSPQ…EISRDSSLGE (65 aa). A compositionally biased stretch (basic and acidic residues) spans 373 to 400; sequence SKTHSTWDEASRVDTSRAEISRDSSLGE.

Belongs to the DNA mismatch repair MutL/HexB family.

Its function is as follows. This protein is involved in the repair of mismatches in DNA. It is required for dam-dependent methyl-directed DNA mismatch repair. May act as a 'molecular matchmaker', a protein that promotes the formation of a stable complex between two or more DNA-binding proteins in an ATP-dependent manner without itself being part of a final effector complex. The polypeptide is DNA mismatch repair protein MutL (Shewanella sp. (strain MR-7)).